We begin with the raw amino-acid sequence, 194 residues long: Protein GrpE (194 aa).

The tract at residues 1-39 is disordered; that stretch reads MTNHEQDQQDNSELLDDDQVTLESQQAADSGAEAPASDD. A compositionally biased stretch (acidic residues) spans 8 to 20; sequence QQDNSELLDDDQV.

This sequence belongs to the GrpE family. In terms of assembly, homodimer.

The protein localises to the cytoplasm. In terms of biological role, participates actively in the response to hyperosmotic and heat shock by preventing the aggregation of stress-denatured proteins, in association with DnaK and GrpE. It is the nucleotide exchange factor for DnaK and may function as a thermosensor. Unfolded proteins bind initially to DnaJ; upon interaction with the DnaJ-bound protein, DnaK hydrolyzes its bound ATP, resulting in the formation of a stable complex. GrpE releases ADP from DnaK; ATP binding to DnaK triggers the release of the substrate protein, thus completing the reaction cycle. Several rounds of ATP-dependent interactions between DnaJ, DnaK and GrpE are required for fully efficient folding. This Saccharophagus degradans (strain 2-40 / ATCC 43961 / DSM 17024) protein is Protein GrpE.